The following is a 277-amino-acid chain: Basic leucine zipper transcriptional factor ATF-like 2 (277 aa).

3 disordered regions span residues 15 to 50 (LGES…HQQH), 126 to 146 (FQTP…CSHE), and 191 to 256 (SFSK…QKSS). A bZIP domain is found at 18-81 (SQKQLKKKQK…AGWGRTLHLH (64 aa)). The segment at 20 to 42 (KQLKKKQKNRVAAQRSRQKHTSK) is basic motif. The span at 41-50 (SKADALHQQH) shows a compositional bias: basic and acidic residues. The leucine-zipper stretch occupies residues 46-67 (LHQQHESLEKQNHALRKEIQAL). Composition is skewed to polar residues over residues 213 to 227 (RQEQ…SSDS) and 247 to 256 (GSSTHWQKSS).

The protein belongs to the bZIP family. In terms of assembly, heterodimer; heterodimerizes with JUN family proteins.

The protein resides in the nucleus. In terms of biological role, AP-1 family transcription factor that controls the differentiation of lineage-specific cells in the immune system. Selectively suppresses CCN1 transcription and hence blocks the downstream cell proliferation signals produced by CCN1 and inhibits CCN1-induced anchorage-independent growth and invasion in several cancer types. Possibly acts by interfering with AP-1 binding to CCN1 promoter. Following infection, participates in the differentiation of CD8(+) thymic conventional dendritic cells in the immune system. Acts via the formation of a heterodimer with JUN family proteins that recognizes and binds DNA sequence 5'-TGA[CG]TCA-3' and regulates expression of target genes. This chain is Basic leucine zipper transcriptional factor ATF-like 2 (Batf2), found in Mus musculus (Mouse).